Consider the following 403-residue polypeptide: Digeranylgeranylglycerophospholipid reductase 1 (403 aa).

FAD contacts are provided by Ala14, Asp33, Cys44, Ala45, Gly47, Arg98, Val122, Asp277, Gly289, and Ile290.

The protein belongs to the geranylgeranyl reductase family. DGGGPL reductase subfamily. Requires FAD as cofactor.

It catalyses the reaction a 2,3-bis-O-phytanyl-sn-glycerol 1-phospholipid + 8 A = a 2,3-bis-O-(geranylgeranyl)-sn-glycerol 1-phospholipid + 8 AH2. It carries out the reaction 2,3-bis-O-(phytanyl)-sn-glycerol 1-phosphate + 8 A = 2,3-bis-O-(geranylgeranyl)-sn-glycerol 1-phosphate + 8 AH2. The catalysed reaction is CDP-2,3-bis-O-(geranylgeranyl)-sn-glycerol + 8 AH2 = CDP-2,3-bis-O-(phytanyl)-sn-glycerol + 8 A. The enzyme catalyses archaetidylserine + 8 AH2 = 2,3-bis-O-phytanyl-sn-glycero-3-phospho-L-serine + 8 A. Its pathway is membrane lipid metabolism; glycerophospholipid metabolism. Functionally, is involved in the reduction of 2,3-digeranylgeranylglycerophospholipids (unsaturated archaeols) into 2,3-diphytanylglycerophospholipids (saturated archaeols) in the biosynthesis of archaeal membrane lipids. Catalyzes the formation of archaetidic acid (2,3-di-O-phytanyl-sn-glyceryl phosphate) from 2,3-di-O-geranylgeranylglyceryl phosphate (DGGGP) via the hydrogenation of each double bond of the isoprenoid chains. Is also probably able to reduce double bonds of geranyl groups in CDP-2,3-bis-O-(geranylgeranyl)-sn-glycerol and archaetidylserine, thus acting at various stages in the biosynthesis of archaeal membrane lipids. The sequence is that of Digeranylgeranylglycerophospholipid reductase 1 from Methanosphaera stadtmanae (strain ATCC 43021 / DSM 3091 / JCM 11832 / MCB-3).